The following is a 266-amino-acid chain: Undecaprenyl-diphosphatase 1 (266 aa).

A run of 8 helical transmembrane segments spans residues 1–21, 39–59, 83–103, 113–133, 141–161, 189–209, 218–238, and 244–264; these read MSII…FLPI, QGLA…VIYF, SKLG…GLLL, SAWV…YADA, IYQL…VAMI, FLLA…ELAL, TLLL…YMFL, and MGML…IVFL.

This sequence belongs to the UppP family.

The protein localises to the cell inner membrane. The enzyme catalyses di-trans,octa-cis-undecaprenyl diphosphate + H2O = di-trans,octa-cis-undecaprenyl phosphate + phosphate + H(+). Functionally, catalyzes the dephosphorylation of undecaprenyl diphosphate (UPP). Confers resistance to bacitracin. This Pseudoalteromonas translucida (strain TAC 125) protein is Undecaprenyl-diphosphatase 1.